The following is a 728-amino-acid chain: Elongation factor 2 (728 aa).

Positions E19 to I261 constitute a tr-type G domain. GTP-binding positions include A28–T35, D94–H98, and N148–D151. At H596 the chain carries Diphthamide.

The protein belongs to the TRAFAC class translation factor GTPase superfamily. Classic translation factor GTPase family. EF-G/EF-2 subfamily.

The protein localises to the cytoplasm. Catalyzes the GTP-dependent ribosomal translocation step during translation elongation. During this step, the ribosome changes from the pre-translocational (PRE) to the post-translocational (POST) state as the newly formed A-site-bound peptidyl-tRNA and P-site-bound deacylated tRNA move to the P and E sites, respectively. Catalyzes the coordinated movement of the two tRNA molecules, the mRNA and conformational changes in the ribosome. The sequence is that of Elongation factor 2 from Halobacterium salinarum (strain ATCC 29341 / DSM 671 / R1).